Here is a 206-residue protein sequence, read N- to C-terminus: 3-demethoxyubiquinol 3-hydroxylase (206 aa).

Fe cation contacts are provided by Glu55, Glu85, His88, Glu137, Glu169, and His172.

This sequence belongs to the COQ7 family. The cofactor is Fe cation.

The protein resides in the cell membrane. It catalyses the reaction a 5-methoxy-2-methyl-3-(all-trans-polyprenyl)benzene-1,4-diol + AH2 + O2 = a 3-demethylubiquinol + A + H2O. It functions in the pathway cofactor biosynthesis; ubiquinone biosynthesis. Its function is as follows. Catalyzes the hydroxylation of 2-nonaprenyl-3-methyl-6-methoxy-1,4-benzoquinol during ubiquinone biosynthesis. The chain is 3-demethoxyubiquinol 3-hydroxylase from Aromatoleum aromaticum (strain DSM 19018 / LMG 30748 / EbN1) (Azoarcus sp. (strain EbN1)).